Consider the following 243-residue polypeptide: Chalcone--flavanone isomerase (243 aa).

Residues Thr-50, Asn-115, and Ser-192 each contribute to the substrate site.

This sequence belongs to the chalcone isomerase family.

The catalysed reaction is a chalcone = a flavanone.. It functions in the pathway secondary metabolite biosynthesis; flavonoid biosynthesis. Catalyzes the intramolecular cyclization of bicyclic chalcones into tricyclic (S)-flavanones. Responsible for the isomerization of 4,2',4',6'-tetrahydroxychalcone (also termed chalcone) into naringenin. In Ipomoea batatas (Sweet potato), this protein is Chalcone--flavanone isomerase (CHI).